The following is a 98-amino-acid chain: NADH-ubiquinone oxidoreductase chain 4L (98 aa).

3 helical membrane-spanning segments follow: residues 1–21 (MSLT…GLLM), 29–49 (SLLC…ITIL), and 61–81 (IILL…LVMV).

Belongs to the complex I subunit 4L family. In terms of assembly, core subunit of respiratory chain NADH dehydrogenase (Complex I) which is composed of 45 different subunits.

The protein localises to the mitochondrion inner membrane. The enzyme catalyses a ubiquinone + NADH + 5 H(+)(in) = a ubiquinol + NAD(+) + 4 H(+)(out). Its function is as follows. Core subunit of the mitochondrial membrane respiratory chain NADH dehydrogenase (Complex I) which catalyzes electron transfer from NADH through the respiratory chain, using ubiquinone as an electron acceptor. Part of the enzyme membrane arm which is embedded in the lipid bilayer and involved in proton translocation. The protein is NADH-ubiquinone oxidoreductase chain 4L (MT-ND4L) of Mystacina tuberculata (New Zealand lesser short-tailed bat).